The sequence spans 94 residues: Co-chaperonin GroES (94 aa).

It belongs to the GroES chaperonin family. As to quaternary structure, heptamer of 7 subunits arranged in a ring. Interacts with the chaperonin GroEL.

It is found in the cytoplasm. Functionally, together with the chaperonin GroEL, plays an essential role in assisting protein folding. The GroEL-GroES system forms a nano-cage that allows encapsulation of the non-native substrate proteins and provides a physical environment optimized to promote and accelerate protein folding. GroES binds to the apical surface of the GroEL ring, thereby capping the opening of the GroEL channel. This chain is Co-chaperonin GroES, found in Ehrlichia ruminantium (strain Gardel).